We begin with the raw amino-acid sequence, 59 residues long: UPF0434 protein Noc_2677 (59 aa).

This sequence belongs to the UPF0434 family.

The polypeptide is UPF0434 protein Noc_2677 (Nitrosococcus oceani (strain ATCC 19707 / BCRC 17464 / JCM 30415 / NCIMB 11848 / C-107)).